We begin with the raw amino-acid sequence, 237 residues long: MALSGGDDQVPPGGPMTVSTRLIDAGSTIMQRRLPVKQMNTHVSTFAIYGGDMSRLIGTHHYVHRVNDEFLQCAVYASDRSDAPLIGIEYVISDRLYETLSEDEQKLWHSHAYEVKSGSWAYPRLPEVVAAPELKNIAKTYGKFWCTWQIDRGDKLPMGAPELMMSPQGVGQGVLRPELVKRRDEKYNISTDDLKHTRAEIAEPEWINPMADYWKQHGKCFVLDIATVEMNRHAQFP.

This sequence belongs to the OBAP family.

The polypeptide is Oil body-associated protein 2C (Arabidopsis thaliana (Mouse-ear cress)).